Consider the following 177-residue polypeptide: ATP synthase subunit delta (177 aa).

This sequence belongs to the ATPase delta chain family. As to quaternary structure, F-type ATPases have 2 components, F(1) - the catalytic core - and F(0) - the membrane proton channel. F(1) has five subunits: alpha(3), beta(3), gamma(1), delta(1), epsilon(1). F(0) has three main subunits: a(1), b(2) and c(10-14). The alpha and beta chains form an alternating ring which encloses part of the gamma chain. F(1) is attached to F(0) by a central stalk formed by the gamma and epsilon chains, while a peripheral stalk is formed by the delta and b chains.

Its subcellular location is the cell inner membrane. In terms of biological role, f(1)F(0) ATP synthase produces ATP from ADP in the presence of a proton or sodium gradient. F-type ATPases consist of two structural domains, F(1) containing the extramembraneous catalytic core and F(0) containing the membrane proton channel, linked together by a central stalk and a peripheral stalk. During catalysis, ATP synthesis in the catalytic domain of F(1) is coupled via a rotary mechanism of the central stalk subunits to proton translocation. Functionally, this protein is part of the stalk that links CF(0) to CF(1). It either transmits conformational changes from CF(0) to CF(1) or is implicated in proton conduction. The polypeptide is ATP synthase subunit delta (Pseudoalteromonas translucida (strain TAC 125)).